We begin with the raw amino-acid sequence, 367 residues long: Aminomethyltransferase (367 aa).

Belongs to the GcvT family. In terms of assembly, the glycine cleavage system is composed of four proteins: P, T, L and H.

The catalysed reaction is N(6)-[(R)-S(8)-aminomethyldihydrolipoyl]-L-lysyl-[protein] + (6S)-5,6,7,8-tetrahydrofolate = N(6)-[(R)-dihydrolipoyl]-L-lysyl-[protein] + (6R)-5,10-methylene-5,6,7,8-tetrahydrofolate + NH4(+). The glycine cleavage system catalyzes the degradation of glycine. This is Aminomethyltransferase from Shouchella clausii (strain KSM-K16) (Alkalihalobacillus clausii).